Reading from the N-terminus, the 311-residue chain is Lipoyl synthase (311 aa).

Positions 58, 63, 69, 84, 88, 91, and 298 each coordinate [4Fe-4S] cluster. The Radical SAM core domain occupies 70-287 (FGHGTATFMI…EQEALAMGFR (218 aa)).

Belongs to the radical SAM superfamily. Lipoyl synthase family. It depends on [4Fe-4S] cluster as a cofactor.

Its subcellular location is the cytoplasm. The catalysed reaction is [[Fe-S] cluster scaffold protein carrying a second [4Fe-4S](2+) cluster] + N(6)-octanoyl-L-lysyl-[protein] + 2 oxidized [2Fe-2S]-[ferredoxin] + 2 S-adenosyl-L-methionine + 4 H(+) = [[Fe-S] cluster scaffold protein] + N(6)-[(R)-dihydrolipoyl]-L-lysyl-[protein] + 4 Fe(3+) + 2 hydrogen sulfide + 2 5'-deoxyadenosine + 2 L-methionine + 2 reduced [2Fe-2S]-[ferredoxin]. The protein operates within protein modification; protein lipoylation via endogenous pathway; protein N(6)-(lipoyl)lysine from octanoyl-[acyl-carrier-protein]: step 2/2. Functionally, catalyzes the radical-mediated insertion of two sulfur atoms into the C-6 and C-8 positions of the octanoyl moiety bound to the lipoyl domains of lipoate-dependent enzymes, thereby converting the octanoylated domains into lipoylated derivatives. The polypeptide is Lipoyl synthase (Thiobacillus denitrificans (strain ATCC 25259 / T1)).